The following is a 282-amino-acid chain: ATP synthase subunit a (282 aa).

The next 6 helical transmembrane spans lie at Val38–Ala58, Phe97–Met117, Val145–Cys165, Phe187–Ala207, Leu225–Val247, and Thr261–Gly281.

It belongs to the ATPase A chain family. F-type ATPases have 2 components, CF(1) - the catalytic core - and CF(0) - the membrane proton channel. CF(1) has five subunits: alpha(3), beta(3), gamma(1), delta(1), epsilon(1). CF(0) has three main subunits: a(1), b(2) and c(9-12). The alpha and beta chains form an alternating ring which encloses part of the gamma chain. CF(1) is attached to CF(0) by a central stalk formed by the gamma and epsilon chains, while a peripheral stalk is formed by the delta and b chains.

It localises to the cell inner membrane. Its function is as follows. Key component of the proton channel; it plays a direct role in the translocation of protons across the membrane. This chain is ATP synthase subunit a, found in Azoarcus sp. (strain BH72).